We begin with the raw amino-acid sequence, 359 residues long: UDP-N-acetylglucosamine--N-acetylmuramyl-(pentapeptide) pyrophosphoryl-undecaprenol N-acetylglucosamine transferase (359 aa).

Residues 15 to 17, Asn127, Arg166, Ser191, Ile245, 264 to 269, and Gln290 each bind UDP-N-acetyl-alpha-D-glucosamine; these read TGG and ALTVSE.

The protein belongs to the glycosyltransferase 28 family. MurG subfamily.

The protein localises to the cell inner membrane. The catalysed reaction is di-trans,octa-cis-undecaprenyl diphospho-N-acetyl-alpha-D-muramoyl-L-alanyl-D-glutamyl-meso-2,6-diaminopimeloyl-D-alanyl-D-alanine + UDP-N-acetyl-alpha-D-glucosamine = di-trans,octa-cis-undecaprenyl diphospho-[N-acetyl-alpha-D-glucosaminyl-(1-&gt;4)]-N-acetyl-alpha-D-muramoyl-L-alanyl-D-glutamyl-meso-2,6-diaminopimeloyl-D-alanyl-D-alanine + UDP + H(+). Its pathway is cell wall biogenesis; peptidoglycan biosynthesis. In terms of biological role, cell wall formation. Catalyzes the transfer of a GlcNAc subunit on undecaprenyl-pyrophosphoryl-MurNAc-pentapeptide (lipid intermediate I) to form undecaprenyl-pyrophosphoryl-MurNAc-(pentapeptide)GlcNAc (lipid intermediate II). The chain is UDP-N-acetylglucosamine--N-acetylmuramyl-(pentapeptide) pyrophosphoryl-undecaprenol N-acetylglucosamine transferase from Pseudomonas putida (strain GB-1).